The following is a 1116-amino-acid chain: Ubiquitin C-terminal hydrolase 12 (1116 aa).

A compositionally biased stretch (pro residues) spans 1 to 10; that stretch reads MTMMTPPPVD. The tract at residues 1–52 is disordered; it reads MTMMTPPPVDQPEDEEMLVPNSDLVDGPAQPMEVTQPETAASTVENQPAEDP. Residues 36–46 are compositionally biased toward polar residues; sequence QPETAASTVEN. The MATH domain maps to 54 to 179; that stretch reads TLKFTWTIPN…NDTVLVEAEV (126 aa). One can recognise a USP domain in the interval 199 to 524; the sequence is VGLKNQGATC…NAYMLVYIRE (326 aa). The active-site Nucleophile is the C208. H455 acts as the Proton acceptor in catalysis.

This sequence belongs to the peptidase C19 family. In terms of assembly, interacts with SIC/RON3.

The enzyme catalyses Thiol-dependent hydrolysis of ester, thioester, amide, peptide and isopeptide bonds formed by the C-terminal Gly of ubiquitin (a 76-residue protein attached to proteins as an intracellular targeting signal).. Functionally, recognizes and hydrolyzes the peptide bond at the C-terminal Gly of ubiquitin. Involved in the processing of poly-ubiquitin precursors as well as that of ubiquitinated proteins. Positive regulator of root meristem development that, together with UBP13, prevents the ubiquitination and turnover of RGFR1 induced by the RGF1 hormone peptide, thus influencing PLT1 and PLT2 expression. This Arabidopsis thaliana (Mouse-ear cress) protein is Ubiquitin C-terminal hydrolase 12.